The chain runs to 496 residues: Bifunctional protein HldE (496 aa).

The ribokinase stretch occupies residues 1–331 (MDPTPALAEI…AAVHQEEVSA (331 aa)). 206 to 209 (NRKE) is an ATP binding site. D276 is an active-site residue. The tract at residues 358–496 (FTNGCFDLLH…GGSRRSGDTL (139 aa)) is cytidylyltransferase.

This sequence in the N-terminal section; belongs to the carbohydrate kinase PfkB family. The protein in the C-terminal section; belongs to the cytidylyltransferase family. As to quaternary structure, homodimer.

The catalysed reaction is D-glycero-beta-D-manno-heptose 7-phosphate + ATP = D-glycero-beta-D-manno-heptose 1,7-bisphosphate + ADP + H(+). It carries out the reaction D-glycero-beta-D-manno-heptose 1-phosphate + ATP + H(+) = ADP-D-glycero-beta-D-manno-heptose + diphosphate. It participates in nucleotide-sugar biosynthesis; ADP-L-glycero-beta-D-manno-heptose biosynthesis; ADP-L-glycero-beta-D-manno-heptose from D-glycero-beta-D-manno-heptose 7-phosphate: step 1/4. The protein operates within nucleotide-sugar biosynthesis; ADP-L-glycero-beta-D-manno-heptose biosynthesis; ADP-L-glycero-beta-D-manno-heptose from D-glycero-beta-D-manno-heptose 7-phosphate: step 3/4. In terms of biological role, catalyzes the phosphorylation of D-glycero-D-manno-heptose 7-phosphate at the C-1 position to selectively form D-glycero-beta-D-manno-heptose-1,7-bisphosphate. Its function is as follows. Catalyzes the ADP transfer from ATP to D-glycero-beta-D-manno-heptose 1-phosphate, yielding ADP-D-glycero-beta-D-manno-heptose. In Rhodospirillum rubrum (strain ATCC 11170 / ATH 1.1.1 / DSM 467 / LMG 4362 / NCIMB 8255 / S1), this protein is Bifunctional protein HldE.